A 246-amino-acid polypeptide reads, in one-letter code: Myelin protein P0 (246 aa).

The N-terminal stretch at 1–27 (MFRDLKPAYLFCCSVLYAFSVLRPSQG) is a signal peptide. The 116-residue stretch at 28–143 (ISVSTHHNLH…VGTSSDVHLT (116 aa)) folds into the Ig-like V-type domain. Topologically, residues 28-150 (ISVSTHHNLH…HLTVYDKIPP (123 aa)) are extracellular. Cys48 and Cys125 form a disulfide bridge. Residue Asn120 is glycosylated (N-linked (GlcNAc...) (complex) asparagine). Residues 151–178 (VGAGVVSGAIIGTFLGIILLIVGGLYLF) traverse the membrane as a helical segment. Residues 179 to 246 (RYIVRRRARS…KLSESKRDKK (68 aa)) are Cytoplasmic-facing. Residues 200–246 (AERGKVSGKAGTVSKGPVLYATLDQSKSGKGASEKKSKLSESKRDKK) are disordered. The segment covering 231–246 (ASEKKSKLSESKRDKK) has biased composition (basic and acidic residues).

This sequence belongs to the myelin P0 protein family. In terms of processing, N-glycan is sulfated. In terms of tissue distribution, found only in peripheral nervous system Schwann cells.

The protein resides in the cell membrane. Creation of an extracellular membrane face which guides the wrapping process and ultimately compacts adjacent lamellae. This is Myelin protein P0 (mpz) from Heterodontus francisci (Horn shark).